A 417-amino-acid chain; its full sequence is Hydroxysteroid dehydrogenase-like protein 2 (417 aa).

Residues 17-23 (GASRGIG), lysine 42, and aspartate 74 contribute to the NADP(+) site. Tyrosine 168 serves as the catalytic Proton acceptor. An NADP(+)-binding site is contributed by lysine 172. Residues 306 to 414 (ASPLQETFKA…KLEKILGQMN (109 aa)) enclose the SCP2 domain.

The protein belongs to the short-chain dehydrogenases/reductases (SDR) family.

The protein localises to the peroxisome. It localises to the mitochondrion. In terms of biological role, has apparently no steroid dehydrogenase activity. Might act as a metabolic regulator that affects systemic adaptation to nutritional cues. The protein is Hydroxysteroid dehydrogenase-like protein 2 (hsdl2) of Xenopus laevis (African clawed frog).